Consider the following 209-residue polypeptide: Abscisic acid receptor PYL5 (209 aa).

The segment at 44 to 196 is START-like; it reads HAPGEHQCSS…NLTSLAEVSE (153 aa). Residues Cys51 and Cys177 are joined by a disulfide bond. Residues Lys80, 109 to 114, 136 to 142, and Glu161 each bind abscisate; these read ATTSTE and RLRNYSS. The short motif at 105–109 is the Gate loop element; sequence TGLPA. Positions 135–137 match the Latch loop motif; it reads HRL.

Belongs to the PYR/PYL/RCAR abscisic acid intracellular receptor family. In terms of assembly, monomer. Interacts with PP2C30. Binding to PP2C30 is dependent on the presence of abscisic acid (ABA). Interacts with PP2C51. Binding to PP2C51 is dependent on the presence of ABA. Interacts with PP2C50. Binding to PP2C50 is dependent on the presence of ABA. Interacts with PP2C53. In terms of tissue distribution, expressed in leaf sheaths and leaf blades. Expressed at low levels in roots, flowers and seeds.

The protein resides in the nucleus. The protein localises to the cytoplasm. Its subcellular location is the cytosol. Its function is as follows. Intracellular abscisic acid (ABA) receptor that functions as a positive regulator of ABA signaling pathway. Together with ABI5, PP2C30 and SAPK2, is part of an ABA signaling unit that modulates seed germination and early seedling growth. Acts as a positive regulator of abiotic stress-responsive gene expression. Inhibits the protein phosphatases PP2C06 and PP2C09 when activated by ABA. This Oryza sativa subsp. japonica (Rice) protein is Abscisic acid receptor PYL5.